We begin with the raw amino-acid sequence, 201 residues long: FMN-dependent NADH:quinone oxidoreductase (201 aa).

FMN is bound by residues S10, 16 to 18, 96 to 99, and 140 to 143; these read SQS, MYNF, and SRGG.

This sequence belongs to the azoreductase type 1 family. In terms of assembly, homodimer. FMN serves as cofactor.

It carries out the reaction 2 a quinone + NADH + H(+) = 2 a 1,4-benzosemiquinone + NAD(+). It catalyses the reaction N,N-dimethyl-1,4-phenylenediamine + anthranilate + 2 NAD(+) = 2-(4-dimethylaminophenyl)diazenylbenzoate + 2 NADH + 2 H(+). Quinone reductase that provides resistance to thiol-specific stress caused by electrophilic quinones. Its function is as follows. Also exhibits azoreductase activity. Catalyzes the reductive cleavage of the azo bond in aromatic azo compounds to the corresponding amines. In Shigella boydii serotype 4 (strain Sb227), this protein is FMN-dependent NADH:quinone oxidoreductase.